The chain runs to 293 residues: Thiamine-monophosphate kinase (293 aa).

Mg(2+) contacts are provided by Glu25, Val39, Asp40, Asp68, and Asp113. Residues 112–113 and Arg136 contribute to the ATP site; that span reads GD. Asp194 lines the Mg(2+) pocket. Ser196 is a binding site for ATP. Position 197 (Asp197) interacts with Mg(2+). Positions 243 and 286 each coordinate substrate.

Belongs to the thiamine-monophosphate kinase family. In terms of assembly, homodimer.

It catalyses the reaction thiamine phosphate + ATP = thiamine diphosphate + ADP. It participates in cofactor biosynthesis; thiamine diphosphate biosynthesis; thiamine diphosphate from thiamine phosphate: step 1/1. With respect to regulation, is inhibited by AMP; the mode of AMP inhibition is uncompetitive for both TMP and ATP. In terms of biological role, catalyzes the ATP-dependent phosphorylation of thiamine-monophosphate (TMP) to form thiamine-pyrophosphate (TPP), the active form of vitamin B1. The chain is Thiamine-monophosphate kinase from Pyrobaculum calidifontis (strain DSM 21063 / JCM 11548 / VA1).